Consider the following 1025-residue polypeptide: Multidrug resistance protein MdtC (1025 aa).

Transmembrane regions (helical) follow at residues 3 to 23 (FFAL…AITL), 333 to 353 (EVEQ…FLFL), 360 to 380 (IIPA…MYLC), 387 to 407 (LSLM…IVVL), 431 to 451 (VGFT…PLLL), 463 to 483 (FAVT…TLTP), 528 to 548 (LVGV…ISIP), 853 to 873 (VILI…LYES), 875 to 895 (VHPL…LLAL), 897 to 917 (LFNA…IGIV), 953 to 973 (PIMM…LSGG), and 984 to 1004 (ITIV…TPVV).

This sequence belongs to the resistance-nodulation-cell division (RND) (TC 2.A.6) family. MdtC subfamily. In terms of assembly, part of a tripartite efflux system composed of MdtA, MdtB and MdtC. MdtC forms a heteromultimer with MdtB.

It is found in the cell inner membrane. Its function is as follows. The MdtABC tripartite complex confers resistance against novobiocin and deoxycholate. This Escherichia coli O17:K52:H18 (strain UMN026 / ExPEC) protein is Multidrug resistance protein MdtC.